The sequence spans 1574 residues: DNA-directed RNA polymerase subunit beta' (1574 aa).

Zn(2+) is bound by residues C64, C66, C79, and C82. Positions 590, 592, and 594 each coordinate Mg(2+). Zn(2+) contacts are provided by C928, C1002, C1009, and C1012.

This sequence belongs to the RNA polymerase beta' chain family. In terms of assembly, the RNAP catalytic core consists of 2 alpha, 1 beta, 1 beta' and 1 omega subunit. When a sigma factor is associated with the core the holoenzyme is formed, which can initiate transcription. The cofactor is Mg(2+). Zn(2+) serves as cofactor.

It carries out the reaction RNA(n) + a ribonucleoside 5'-triphosphate = RNA(n+1) + diphosphate. In terms of biological role, DNA-dependent RNA polymerase catalyzes the transcription of DNA into RNA using the four ribonucleoside triphosphates as substrates. The chain is DNA-directed RNA polymerase subunit beta' from Aquifex aeolicus (strain VF5).